The primary structure comprises 332 residues: L-lactate dehydrogenase A chain (332 aa).

Residues 29 to 57 (GMVG…MEDK) and arginine 99 each bind NAD(+). The substrate site is built by arginine 106, asparagine 138, and arginine 169. Asparagine 138 is an NAD(+) binding site. The active-site Proton acceptor is the histidine 193. Threonine 248 contacts substrate.

The protein belongs to the LDH/MDH superfamily. LDH family. Homotetramer.

It localises to the cytoplasm. It catalyses the reaction (S)-lactate + NAD(+) = pyruvate + NADH + H(+). It functions in the pathway fermentation; pyruvate fermentation to lactate; (S)-lactate from pyruvate: step 1/1. Interconverts simultaneously and stereospecifically pyruvate and lactate with concomitant interconversion of NADH and NAD(+). This chain is L-lactate dehydrogenase A chain (ldha), found in Sphyraena idiastes (Pelican barracuda).